Here is a 126-residue protein sequence, read N- to C-terminus: Small ribosomal subunit protein uS12 (126 aa).

Residues 1-26 (MPTINQLVRKGRASETTKSKSPALQD) form a disordered region. Asp89 carries the 3-methylthioaspartic acid modification. Residues 101 to 126 (SLDTQGVKDRKQARSKYGAKRAKAAK) form a disordered region. The span at 113–126 (ARSKYGAKRAKAAK) shows a compositional bias: basic residues.

Belongs to the universal ribosomal protein uS12 family. As to quaternary structure, part of the 30S ribosomal subunit. Contacts proteins S8 and S17. May interact with IF1 in the 30S initiation complex.

Its function is as follows. With S4 and S5 plays an important role in translational accuracy. Functionally, interacts with and stabilizes bases of the 16S rRNA that are involved in tRNA selection in the A site and with the mRNA backbone. Located at the interface of the 30S and 50S subunits, it traverses the body of the 30S subunit contacting proteins on the other side and probably holding the rRNA structure together. The combined cluster of proteins S8, S12 and S17 appears to hold together the shoulder and platform of the 30S subunit. The sequence is that of Small ribosomal subunit protein uS12 from Burkholderia pseudomallei (strain 1106a).